A 494-amino-acid polypeptide reads, in one-letter code: Maintenance of mitochondrial morphology protein 1 (494 aa).

Topologically, residues 1-22 (MSSQPGDPATLPAQSSLSFTQG) are lumenal. A helical membrane pass occupies residues 23–43 (FLLGQLSVVLVLAAFIKFFIF). Residues 44 to 494 (GEAPPPPSRG…GSLPEAVTPG (451 aa)) lie on the Cytoplasmic side of the membrane. Disordered regions lie at residues 50 to 98 (PSRG…SSST), 274 to 330 (PPLD…KSNV), 398 to 426 (VRTGDDAETASNGPRSTVSADIGGSARHE), and 449 to 494 (VASR…VTPG). Residues 54 to 64 (LSHRSATHRRS) show a composition bias toward basic residues. 2 stretches are compositionally biased toward polar residues: residues 65–76 (NSIYSNSPQEAG) and 85–98 (STSNVLRPVPSSST). The region spanning 130 to 387 (QPESLDWFNV…EPRVQVVGLP (258 aa)) is the SMP-LTD domain. The segment covering 274–286 (PPLDTPSHSPSPP) has biased composition (pro residues). Composition is skewed to polar residues over residues 406–416 (TASNGPRSTVS) and 466–477 (RSMTRQESSGDL).

Belongs to the MMM1 family. As to quaternary structure, homodimer. Component of the ER-mitochondria encounter structure (ERMES) or MDM complex, composed of mmm1, mdm10, mdm12 and mdm34. A mmm1 homodimer associates with one molecule of mdm12 on each side in a pairwise head-to-tail manner, and the SMP-LTD domains of mmm1 and mdm12 generate a continuous hydrophobic tunnel for phospholipid trafficking.

The protein localises to the endoplasmic reticulum membrane. Component of the ERMES/MDM complex, which serves as a molecular tether to connect the endoplasmic reticulum (ER) and mitochondria. Components of this complex are involved in the control of mitochondrial shape and protein biogenesis, and function in nonvesicular lipid trafficking between the ER and mitochondria. The mdm12-mmm1 subcomplex functions in the major beta-barrel assembly pathway that is responsible for biogenesis of all outer membrane beta-barrel proteins, and acts in a late step after the SAM complex. The mdm10-mdm12-mmm1 subcomplex further acts in the TOM40-specific pathway after the action of the mdm12-mmm1 complex. Essential for establishing and maintaining the structure of mitochondria and maintenance of mtDNA nucleoids. The sequence is that of Maintenance of mitochondrial morphology protein 1 from Aspergillus clavatus (strain ATCC 1007 / CBS 513.65 / DSM 816 / NCTC 3887 / NRRL 1 / QM 1276 / 107).